A 218-amino-acid polypeptide reads, in one-letter code: Protein-methionine-sulfoxide reductase heme-binding subunit MsrQ (218 aa).

5 helical membrane passes run 14-34 (LVHA…WQVW), 60-80 (LLLI…AVVI), 86-106 (LGLY…TLDL), 121-141 (PYIT…ITST), and 155-175 (LHML…WLVK).

The protein belongs to the MsrQ family. In terms of assembly, heterodimer of a catalytic subunit (MsrP) and a heme-binding subunit (MsrQ). It depends on FMN as a cofactor. Requires heme b as cofactor.

The protein resides in the cell inner membrane. Functionally, part of the MsrPQ system that repairs oxidized periplasmic proteins containing methionine sulfoxide residues (Met-O), using respiratory chain electrons. Thus protects these proteins from oxidative-stress damage caused by reactive species of oxygen and chlorine generated by the host defense mechanisms. MsrPQ is essential for the maintenance of envelope integrity under bleach stress, rescuing a wide series of structurally unrelated periplasmic proteins from methionine oxidation. MsrQ provides electrons for reduction to the reductase catalytic subunit MsrP, using the quinone pool of the respiratory chain. The polypeptide is Protein-methionine-sulfoxide reductase heme-binding subunit MsrQ (Xanthomonas axonopodis pv. citri (strain 306)).